The chain runs to 189 residues: Thioredoxin-like protein CITRX, chloroplastic (189 aa).

The transit peptide at 1–56 (MAMAAAASLLPASAAPTLPGRAFRPPRNSTPTASLSCDGGSRCRGVGLGVILGGCR) directs the protein to the chloroplast. One can recognise a Thioredoxin domain in the interval 72 to 189 (GSGKYIAPDY…MIRNIIDNEL (118 aa)). Residues cysteine 112 and cysteine 115 each act as nucleophile in the active site. An intrachain disulfide couples cysteine 112 to cysteine 115.

It belongs to the thioredoxin family. Plant CITRX-type subfamily.

Its subcellular location is the plastid. It is found in the chloroplast. Its function is as follows. Probable thiol-disulfide oxidoreductase that may play a role in proper chloroplast development. This Oryza sativa subsp. japonica (Rice) protein is Thioredoxin-like protein CITRX, chloroplastic.